The sequence spans 393 residues: Geranylgeranyl pyrophosphate synthase 2 (393 aa).

Lys-109, Arg-112, and His-141 together coordinate isopentenyl diphosphate. Residues Asp-148 and Asp-152 each coordinate Mg(2+). Dimethylallyl diphosphate is bound at residue Arg-157. Arg-158 serves as a coordination point for isopentenyl diphosphate. Dimethylallyl diphosphate-binding residues include Lys-235, Thr-236, and Gln-275. Asp-278 is a binding site for Mg(2+). Dimethylallyl diphosphate contacts are provided by Asn-282, Lys-292, and Lys-302.

This sequence belongs to the FPP/GGPP synthase family. Mg(2+) is required as a cofactor.

The catalysed reaction is isopentenyl diphosphate + dimethylallyl diphosphate = (2E)-geranyl diphosphate + diphosphate. The enzyme catalyses isopentenyl diphosphate + (2E)-geranyl diphosphate = (2E,6E)-farnesyl diphosphate + diphosphate. It carries out the reaction isopentenyl diphosphate + (2E,6E)-farnesyl diphosphate = (2E,6E,10E)-geranylgeranyl diphosphate + diphosphate. It functions in the pathway plant hormone biosynthesis; gibberellin biosynthesis. Functionally, geranylgeranyl pyrophosphate synthase; part of the gene cluster that mediates the biosynthesis of gibberellins (GAs), diterpenoids that may provide a selective advantage during infection of the preferred host plant, rice. Gibberellins (GAs) are diterpenoids and are synthesized via the mevalonate pathway. Biosynthesis of the major metabolite GA3 (gibberellic acid) from geranylgeranyl diphosphate (GGPP) requires 13 steps. The GGPP produced by the geranylgeranyl diphosphate synthase GGS2 is converted to ent-kaurene via ent-copalyldiphosphate in a two-step cyclization reaction performed by the bifunctional ent-copalyl diphosphate synthase/ent-kaurene synthase enzyme (CPS/KS). Ent-Kaurene is metabolized to GAs by a series of oxidation reactions catalyzed by cytochrome P450 monooxygenases. Cytochrome P450 monooxygenase P450-4 is an ent-kaurene oxidase that catalyzes the three oxidation steps between ent-kaurene and ent-kaurenoic acid. The highly multifunctional cytochrome P450 monooxygenase P450-1 then catalyzes four steps involving oxidation at two carbon atoms, in the main pathway from ent-kaurenoic acid to GA14 via GA12-aldehyde as well as producing kaurenolides and fujenoic acids as by-products. The cytochrome P450 monooxygenase P450-2 then converts GA14 to GA4 by removal of C-20. GA4 is further converted to GA7 by the GA4 desaturase DES via 1,2-desaturation before cytochrome P450 monooxygenase P450-3, a 13-hydroxylase, hydroxylates GA7 to GA3, the final product of the GA-biosynthetic pathway. This is Geranylgeranyl pyrophosphate synthase 2 from Gibberella fujikuroi (strain CBS 195.34 / IMI 58289 / NRRL A-6831) (Bakanae and foot rot disease fungus).